The sequence spans 295 residues: Alpha-soluble NSF attachment protein (295 aa).

At Met1 the chain carries N-acetylmethionine. Phosphoserine is present on residues Ser26, Ser29, and Ser195.

It belongs to the SNAP family. As to quaternary structure, interacts with PRKCABP, and disrupts the interaction between GRIA2 and PRKCABP, leading to the internalization of GRIA2. Found in a complex with VAMP8. Component of a SNARE-like complex that contains at least ZW10, USE1L, RINT1, STX18 and NAPA/SNAP-alpha. Interacts with VTI1A. Interacts with STX12. Interacts with GNA12 (via N-terminus); the interaction promotes CDH5 localization to plasma membrane.

The protein resides in the cell membrane. Its function is as follows. Required for vesicular transport between the endoplasmic reticulum and the Golgi apparatus. Together with GNA12 promotes CDH5 localization to plasma membrane. The polypeptide is Alpha-soluble NSF attachment protein (NAPA) (Homo sapiens (Human)).